The sequence spans 279 residues: Energy-coupling factor transporter ATP-binding protein EcfA2 (279 aa).

In terms of domain architecture, ABC transporter spans 3–245; sequence ITLKNVSYTY…LDFMESIQLG (243 aa). Residue 40-47 participates in ATP binding; it reads GHTGSGKS.

It belongs to the ABC transporter superfamily. Energy-coupling factor EcfA family. In terms of assembly, forms a stable energy-coupling factor (ECF) transporter complex composed of 2 membrane-embedded substrate-binding proteins (S component), 2 ATP-binding proteins (A component) and 2 transmembrane proteins (T component).

The protein resides in the cell membrane. Its function is as follows. ATP-binding (A) component of a common energy-coupling factor (ECF) ABC-transporter complex. Unlike classic ABC transporters this ECF transporter provides the energy necessary to transport a number of different substrates. This chain is Energy-coupling factor transporter ATP-binding protein EcfA2, found in Streptococcus sanguinis (strain SK36).